A 256-amino-acid chain; its full sequence is Protein FixA (256 aa).

It belongs to the ETF beta-subunit/FixA family. In terms of assembly, heterodimer of FixA and FixB.

It participates in amine and polyamine metabolism; carnitine metabolism. In terms of biological role, required for anaerobic carnitine reduction. May bring reductant to CaiA. The chain is Protein FixA from Salmonella agona (strain SL483).